A 322-amino-acid chain; its full sequence is Beta-1,3-galactosyltransferase bre-5 (322 aa).

At 1–16 (MFLCVRILKRKYHELS) the chain is on the cytoplasmic side. Residues 17–37 (SFQKLLIFTITIFLLWVLGVV) form a helical; Signal-anchor for type II membrane protein membrane-spanning segment. Topologically, residues 38–322 (DKFRETSFGD…YEYSQLNGFE (285 aa)) are lumenal. A glycan (N-linked (GlcNAc...) asparagine) is linked at asparagine 150.

Belongs to the glycosyltransferase 31 family. In terms of tissue distribution, expressed in the gut.

Its subcellular location is the golgi apparatus membrane. The protein operates within protein modification; protein glycosylation. Transfers N-acetylgalactosamine onto mannose groups of carbohydrate substrates. Required for susceptibility to pore-forming crystal toxins in conjunction with bre-1, bre-2, bre-3, and bre-4. Involved in resistance to the nematotoxic C.cinerea galectin Cgl2. In Caenorhabditis elegans, this protein is Beta-1,3-galactosyltransferase bre-5.